We begin with the raw amino-acid sequence, 313 residues long: Ribosomal RNA small subunit methyltransferase H (313 aa).

Residues 35 to 37, D55, F80, D102, and Q109 contribute to the S-adenosyl-L-methionine site; that span reads GGH.

It belongs to the methyltransferase superfamily. RsmH family.

The protein resides in the cytoplasm. It carries out the reaction cytidine(1402) in 16S rRNA + S-adenosyl-L-methionine = N(4)-methylcytidine(1402) in 16S rRNA + S-adenosyl-L-homocysteine + H(+). Specifically methylates the N4 position of cytidine in position 1402 (C1402) of 16S rRNA. In Shewanella denitrificans (strain OS217 / ATCC BAA-1090 / DSM 15013), this protein is Ribosomal RNA small subunit methyltransferase H.